Here is a 3061-residue protein sequence, read N- to C-terminus: Genome polyprotein (3061 aa).

A Peptidase S30 domain is found at 141-284 (KLTEGQMNHL…QGVMDSMVQF (144 aa)). Residues H192, D201, and S235 each act as for P1 proteinase activity in the active site. Residues 334–337 (KITC) carry the Involved in interaction with stylet and aphid transmission motif. The Involved in virions binding and aphid transmission signature appears at 592-594 (PTK). The 123-residue stretch at 618 to 740 (LYIARQGFCY…ESDIKHYRVG (123 aa)) folds into the Peptidase C6 domain. Active-site for helper component proteinase activity residues include C626 and H699. One can recognise a Helicase ATP-binding domain in the interval 1229–1381 (DIAHSEHLDF…TQQPVKLIVE (153 aa)). ATP is bound at residue 1242–1249 (GAVGSGKS). Residues 1331–1334 (DECH) carry the DECH box motif. The Helicase C-terminal domain maps to 1400 to 1559 (DVVQFGSNVL…NLPVMTGGVS (160 aa)). Residues 1884–1892 (RKKGKGKGT) carry the Nuclear localization signal motif. Residue Y1907 is modified to O-(5'-phospho-RNA)-tyrosine. The Peptidase C4 domain occupies 2032–2250 (AKSLMRGLRD…VLWGPLKLKE (219 aa)). Catalysis depends on for nuclear inclusion protein A activity residues H2077, D2112, and C2182. In terms of domain architecture, RdRp catalytic spans 2517–2641 (WVYCDADGSQ…AVNPEKESIL (125 aa)). The disordered stretch occupies residues 2795 to 2835 (GNDTIDAGGSTKKDAKQEQGSIQPNLNKEKEKDVNVGTSGT). T3044 carries the post-translational modification Phosphothreonine.

This sequence belongs to the potyviridae genome polyprotein family. In terms of assembly, interacts with host eIF4E protein (via cap-binding region); this interaction mediates the translation of the VPg-viral RNA conjugates. Part of a complex that comprises VPg, RNA, host EIF4E and EIF4G; this interaction mediates the translation of the VPg-viral RNA conjugates. In terms of processing, VPg is uridylylated by the polymerase and is covalently attached to the 5'-end of the genomic RNA. This uridylylated form acts as a nucleotide-peptide primer for the polymerase. Post-translationally, potyviral RNA is expressed as two polyproteins which undergo post-translational proteolytic processing. Genome polyprotein is processed by NIa-pro, P1 and HC-pro proteinases resulting in the production of at least ten individual proteins. P3N-PIPO polyprotein is cleaved by P1 and HC-pro proteinases resulting in the production of three individual proteins. The P1 proteinase and the HC-pro cleave only their respective C-termini autocatalytically. 6K1 is essential for proper proteolytic separation of P3 from CI.

Its subcellular location is the host cytoplasmic vesicle. It localises to the host nucleus. The protein resides in the virion. The catalysed reaction is RNA(n) + a ribonucleoside 5'-triphosphate = RNA(n+1) + diphosphate. It catalyses the reaction Hydrolyzes glutaminyl bonds, and activity is further restricted by preferences for the amino acids in P6 - P1' that vary with the species of potyvirus, e.g. Glu-Xaa-Xaa-Tyr-Xaa-Gln-|-(Ser or Gly) for the enzyme from tobacco etch virus. The natural substrate is the viral polyprotein, but other proteins and oligopeptides containing the appropriate consensus sequence are also cleaved.. It carries out the reaction Hydrolyzes a Gly-|-Gly bond at its own C-terminus, commonly in the sequence -Tyr-Xaa-Val-Gly-|-Gly, in the processing of the potyviral polyprotein.. Required for aphid transmission and also has proteolytic activity. Only cleaves a Gly-Gly dipeptide at its own C-terminus. Interacts with virions and aphid stylets. Acts as a suppressor of RNA-mediated gene silencing, also known as post-transcriptional gene silencing (PTGS), a mechanism of plant viral defense that limits the accumulation of viral RNAs. May have RNA-binding activity. Its function is as follows. Has helicase activity. It may be involved in replication. In terms of biological role, indispensable for virus replication. Reduces the abundance of host transcripts related to jasmonic acid biosynthesis therefore altering the host defenses. In order to increase its own stability, decreases host protein degradation pathways. Functionally, indispensable for virus replication. Mediates the cap-independent, EIF4E-dependent translation of viral genomic RNAs. Binds to the cap-binding site of host EIF4E and thus interferes with the host EIF4E-dependent mRNA export and translation. VPg-RNA directly binds EIF4E and is a template for transcription. Also forms trimeric complexes with EIF4E-EIF4G, which are templates for translation. Its function is as follows. Has RNA-binding and proteolytic activities. In terms of biological role, an RNA-dependent RNA polymerase that plays an essential role in the virus replication. Functionally, involved in aphid transmission, cell-to-cell and systemis movement, encapsidation of the viral RNA and in the regulation of viral RNA amplification. This Potato virus Y (strain Hungarian) (PVY) protein is Genome polyprotein.